A 34-amino-acid chain; its full sequence is Photosystem II reaction center protein M (34 aa).

A helical transmembrane segment spans residues 5-25 (ILAFIATALFILVPTSFLLII).

This sequence belongs to the PsbM family. In terms of assembly, PSII is composed of 1 copy each of membrane proteins PsbA, PsbB, PsbC, PsbD, PsbE, PsbF, PsbH, PsbI, PsbJ, PsbK, PsbL, PsbM, PsbT, PsbX, PsbY, PsbZ, Psb30/Ycf12, at least 3 peripheral proteins of the oxygen-evolving complex and a large number of cofactors. It forms dimeric complexes.

It localises to the plastid. It is found in the chloroplast thylakoid membrane. In terms of biological role, one of the components of the core complex of photosystem II (PSII). PSII is a light-driven water:plastoquinone oxidoreductase that uses light energy to abstract electrons from H(2)O, generating O(2) and a proton gradient subsequently used for ATP formation. It consists of a core antenna complex that captures photons, and an electron transfer chain that converts photonic excitation into a charge separation. This subunit is found at the monomer-monomer interface. The polypeptide is Photosystem II reaction center protein M (Triticum aestivum (Wheat)).